The sequence spans 93 residues: Defensin-like protein 209 (93 aa).

A signal peptide spans 1-19 (MKITILFLTLLVLSSSCTS). Intrachain disulfides connect Cys63/Cys80, Cys66/Cys85, and Cys70/Cys87.

It belongs to the DEFL family.

It is found in the secreted. The sequence is that of Defensin-like protein 209 from Arabidopsis thaliana (Mouse-ear cress).